Consider the following 147-residue polypeptide: MLLVGSGAKFVQQLEQAGALAIYVTPEGGSEGHYLRRLRGAGYEVVTLSSKGIGDLASYLTRIHGVRPATLGKSERRTYFFPALIEQYRATLPPKAKGLVFWFYEGHVFSQQELSYLVKLSREDKGVKFVVELGRERSIRWQPLQSA.

The protein belongs to the complex I NdhN subunit family. As to quaternary structure, NDH-1 can be composed of about 15 different subunits; different subcomplexes with different compositions have been identified which probably have different functions.

The protein resides in the cellular thylakoid membrane. The enzyme catalyses a plastoquinone + NADH + (n+1) H(+)(in) = a plastoquinol + NAD(+) + n H(+)(out). The catalysed reaction is a plastoquinone + NADPH + (n+1) H(+)(in) = a plastoquinol + NADP(+) + n H(+)(out). Functionally, NDH-1 shuttles electrons from an unknown electron donor, via FMN and iron-sulfur (Fe-S) centers, to quinones in the respiratory and/or the photosynthetic chain. The immediate electron acceptor for the enzyme in this species is believed to be plastoquinone. Couples the redox reaction to proton translocation, and thus conserves the redox energy in a proton gradient. Cyanobacterial NDH-1 also plays a role in inorganic carbon-concentration. In Synechococcus sp. (strain JA-2-3B'a(2-13)) (Cyanobacteria bacterium Yellowstone B-Prime), this protein is NAD(P)H-quinone oxidoreductase subunit N.